Consider the following 529-residue polypeptide: Berberine bridge enzyme-like 7 (529 aa).

Residues Met1–Ala19 form the signal peptide. Cys32 and Cys95 are disulfide-bonded. N-linked (GlcNAc...) asparagine glycosylation is present at Asn52. In terms of domain architecture, FAD-binding PCMH-type spans Tyr69–Val247. The 6-(S-cysteinyl)-8alpha-(pros-histidyl)-FAD (His-Cys) cross-link spans His110–Cys172. 3 N-linked (GlcNAc...) asparagine glycosylation sites follow: Asn257, Asn341, and Asn439.

The protein belongs to the oxygen-dependent FAD-linked oxidoreductase family. Requires FAD as cofactor. In terms of processing, the FAD cofactor is bound via a bicovalent 6-S-cysteinyl, 8alpha-N1-histidyl FAD linkage.

The protein localises to the secreted. It localises to the cell wall. Probable flavin-dependent oxidoreductase. This Arabidopsis thaliana (Mouse-ear cress) protein is Berberine bridge enzyme-like 7.